Consider the following 776-residue polypeptide: Lysyl oxidase homolog 2 (776 aa).

Positions Met-1 to Ala-25 are cleaved as a signal peptide. 4 SRCR domains span residues Val-61–Ser-162, Ile-191–Val-305, Val-329–Asn-428, and Val-438–Ser-546. 9 cysteine pairs are disulfide-bonded: Cys-87-Cys-151, Cys-100-Cys-161, Cys-131-Cys-141, Cys-221-Cys-294, Cys-234-Cys-304, Cys-268-Cys-278, Cys-354-Cys-417, Cys-367-Cys-427, and Cys-398-Cys-408. Asn-267 is a glycosylation site (N-linked (GlcNAc...) asparagine). N-linked (GlcNAc...) asparagine glycosylation is present at Asn-291. Asn-458 is a glycosylation site (N-linked (GlcNAc...) asparagine). 3 disulfide bridges follow: Cys-467–Cys-532, Cys-480–Cys-545, and Cys-514–Cys-524. A lysyl-oxidase like region spans residues Pro-550 to Ala-753. Ca(2+)-binding residues include Asp-551 and Leu-552. 4 disulfide bridges follow: Cys-575–Cys-627, Cys-581–Cys-697, Cys-659–Cys-675, and Cys-665–Cys-687. The Cu cation site is built by His-628, His-630, and His-632. N-linked (GlcNAc...) asparagine glycosylation occurs at Asn-646. The segment at residues Lys-655–Tyr-691 is a cross-link (lysine tyrosylquinone (Lys-Tyr)). Tyr-691 is modified (2',4',5'-topaquinone). Residues Glu-724, Asp-726, Asn-729, and Asn-730 each contribute to the Ca(2+) site. A disulfide bridge connects residues Cys-734 and Cys-748.

The protein belongs to the lysyl oxidase family. In terms of assembly, component of some chromatin repressor complex. Interacts with SNAI1. Interacts with TAF10. Interacts with HSPA5. Interacts with EFEMP2. Cu cation serves as cofactor. Requires lysine tyrosylquinone residue as cofactor. Post-translationally, the lysine tyrosylquinone cross-link (LTQ) is generated by condensation of the epsilon-amino group of a lysine with a topaquinone produced by oxidation of tyrosine. In terms of processing, N-glycosylated. N-glycosylation on Asn-458 and Asn-646 may be essential for proper folding and secretion; may be composed of a fucosylated carbohydrates attached to a trimannose N-linked glycan core.

It is found in the secreted. The protein localises to the extracellular space. Its subcellular location is the extracellular matrix. It localises to the basement membrane. The protein resides in the nucleus. It is found in the chromosome. The protein localises to the endoplasmic reticulum. It catalyses the reaction L-lysyl-[protein] + O2 + H2O = (S)-2-amino-6-oxohexanoyl-[protein] + H2O2 + NH4(+). Its activity is regulated as follows. Specifically inhibited by a mouse monoclonal antibody AB0023, inhibition occurs in a non-competitive manner. Mediates the post-translational oxidative deamination of lysine residues on target proteins leading to the formation of deaminated lysine (allysine). Acts as a transcription corepressor and specifically mediates deamination of trimethylated 'Lys-4' of histone H3 (H3K4me3), a specific tag for epigenetic transcriptional activation. Shows no activity against histone H3 when it is trimethylated on 'Lys-9' (H3K9me3) or 'Lys-27' (H3K27me3) or when 'Lys-4' is monomethylated (H3K4me1) or dimethylated (H3K4me2). Also mediates deamination of methylated TAF10, a member of the transcription factor IID (TFIID) complex, which induces release of TAF10 from promoters, leading to inhibition of TFIID-dependent transcription. LOXL2-mediated deamination of TAF10 results in transcriptional repression of genes required for embryonic stem cell pluripotency including POU5F1/OCT4, NANOG, KLF4 and SOX2. Involved in epithelial to mesenchymal transition (EMT) via interaction with SNAI1 and participates in repression of E-cadherin CDH1, probably by mediating deamination of histone H3. During EMT, involved with SNAI1 in negatively regulating pericentromeric heterochromatin transcription. SNAI1 recruits LOXL2 to pericentromeric regions to oxidize histone H3 and repress transcription which leads to release of heterochromatin component CBX5/HP1A, enabling chromatin reorganization and acquisition of mesenchymal traits. Interacts with the endoplasmic reticulum protein HSPA5 which activates the IRE1-XBP1 pathway of the unfolded protein response, leading to expression of several transcription factors involved in EMT and subsequent EMT induction. When secreted into the extracellular matrix, promotes cross-linking of extracellular matrix proteins by mediating oxidative deamination of peptidyl lysine residues in precursors to fibrous collagen and elastin. Acts as a regulator of sprouting angiogenesis, probably via collagen IV scaffolding. Acts as a regulator of chondrocyte differentiation, probably by regulating expression of factors that control chondrocyte differentiation. The sequence is that of Lysyl oxidase homolog 2 (Loxl2) from Rattus norvegicus (Rat).